Consider the following 259-residue polypeptide: uncharacterized protein (259 aa).

In terms of domain architecture, ABC transporter spans 4-248; the sequence is LQTTNLSKTY…SILDTLSVLG (245 aa). 42 to 49 is an ATP binding site; that stretch reads GPSGSGKT.

The protein belongs to the ABC transporter superfamily.

This is an uncharacterized protein from Bacillus subtilis (strain 168).